Consider the following 190-residue polypeptide: Xanthine phosphoribosyltransferase (190 aa).

Xanthine contacts are provided by leucine 20 and asparagine 27. 128-132 (ANGHA) provides a ligand contact to 5-phospho-alpha-D-ribose 1-diphosphate. Xanthine is bound at residue lysine 156.

The protein belongs to the purine/pyrimidine phosphoribosyltransferase family. Xpt subfamily. As to quaternary structure, homodimer.

The protein localises to the cytoplasm. It catalyses the reaction XMP + diphosphate = xanthine + 5-phospho-alpha-D-ribose 1-diphosphate. It participates in purine metabolism; XMP biosynthesis via salvage pathway; XMP from xanthine: step 1/1. Functionally, converts the preformed base xanthine, a product of nucleic acid breakdown, to xanthosine 5'-monophosphate (XMP), so it can be reused for RNA or DNA synthesis. The chain is Xanthine phosphoribosyltransferase from Pseudomonas aeruginosa (strain ATCC 15692 / DSM 22644 / CIP 104116 / JCM 14847 / LMG 12228 / 1C / PRS 101 / PAO1).